Here is a 338-residue protein sequence, read N- to C-terminus: Ketol-acid reductoisomerase (NADP(+)) (338 aa).

The KARI N-terminal Rossmann domain occupies 1–181 (MKVFYDKDCD…GGGRTGIIET (181 aa)). NADP(+)-binding positions include 24-27 (YGSQ), Arg47, Ser50, Thr52, and 82-85 (DEFQ). His107 is an active-site residue. Gly133 provides a ligand contact to NADP(+). The KARI C-terminal knotted domain occupies 182–327 (TFKDETETDL…EKLRSMMPWI (146 aa)). Asp190, Glu194, Glu226, and Glu230 together coordinate Mg(2+). Ser251 contributes to the substrate binding site.

Belongs to the ketol-acid reductoisomerase family. It depends on Mg(2+) as a cofactor.

It catalyses the reaction (2R)-2,3-dihydroxy-3-methylbutanoate + NADP(+) = (2S)-2-acetolactate + NADPH + H(+). The enzyme catalyses (2R,3R)-2,3-dihydroxy-3-methylpentanoate + NADP(+) = (S)-2-ethyl-2-hydroxy-3-oxobutanoate + NADPH + H(+). Its pathway is amino-acid biosynthesis; L-isoleucine biosynthesis; L-isoleucine from 2-oxobutanoate: step 2/4. The protein operates within amino-acid biosynthesis; L-valine biosynthesis; L-valine from pyruvate: step 2/4. Its function is as follows. Involved in the biosynthesis of branched-chain amino acids (BCAA). Catalyzes an alkyl-migration followed by a ketol-acid reduction of (S)-2-acetolactate (S2AL) to yield (R)-2,3-dihydroxy-isovalerate. In the isomerase reaction, S2AL is rearranged via a Mg-dependent methyl migration to produce 3-hydroxy-3-methyl-2-ketobutyrate (HMKB). In the reductase reaction, this 2-ketoacid undergoes a metal-dependent reduction by NADPH to yield (R)-2,3-dihydroxy-isovalerate. In Pseudomonas syringae pv. tomato (strain ATCC BAA-871 / DC3000), this protein is Ketol-acid reductoisomerase (NADP(+)).